Consider the following 208-residue polypeptide: Redox-sensing transcriptional repressor Rex (208 aa).

A DNA-binding region (H-T-H motif) is located at residues 15-54 (SYYMCLERLLDEGVEVVSSEELARRLDLKASQIRKDLSYF). Residue 89–94 (GAGNIG) participates in NAD(+) binding.

The protein belongs to the transcriptional regulatory Rex family. Homodimer.

Its subcellular location is the cytoplasm. Functionally, modulates transcription in response to changes in cellular NADH/NAD(+) redox state. This is Redox-sensing transcriptional repressor Rex from Thermotoga petrophila (strain ATCC BAA-488 / DSM 13995 / JCM 10881 / RKU-1).